The primary structure comprises 136 residues: Basic phospholipase A2 Tgc-K49 (136 aa).

An N-terminal signal peptide occupies residues 1–15 (MRTLWIVAVLLVGEG). 7 disulfide bridges follow: cysteine 41/cysteine 130, cysteine 43/cysteine 59, cysteine 58/cysteine 110, cysteine 64/cysteine 136, cysteine 65/cysteine 103, cysteine 72/cysteine 96, and cysteine 90/cysteine 101. Histidine 62 is a catalytic residue. Residue aspartate 104 is part of the active site.

It belongs to the phospholipase A2 family. Group II subfamily. K49 sub-subfamily. Expressed by the venom gland.

The protein resides in the secreted. It catalyses the reaction a 1,2-diacyl-sn-glycero-3-phosphocholine + H2O = a 1-acyl-sn-glycero-3-phosphocholine + a fatty acid + H(+). In terms of biological role, PLA2 catalyzes the calcium-dependent hydrolysis of the 2-acyl groups in 3-sn-phosphoglycerides. The polypeptide is Basic phospholipase A2 Tgc-K49 (Trimeresurus gracilis (Kikuchi habu)).